A 274-amino-acid polypeptide reads, in one-letter code: tRNA pseudouridine synthase A (274 aa).

Catalysis depends on Asp54, which acts as the Nucleophile. Tyr112 serves as a coordination point for substrate.

This sequence belongs to the tRNA pseudouridine synthase TruA family. Homodimer.

It carries out the reaction uridine(38/39/40) in tRNA = pseudouridine(38/39/40) in tRNA. Functionally, formation of pseudouridine at positions 38, 39 and 40 in the anticodon stem and loop of transfer RNAs. This chain is tRNA pseudouridine synthase A, found in Solidesulfovibrio magneticus (strain ATCC 700980 / DSM 13731 / RS-1) (Desulfovibrio magneticus).